The sequence spans 120 residues: Seminal plasma protein HSP-1 (120 aa).

Tandem repeats lie at residues 1–13 (DLQTTGADHSATV) and 16–28 (DQQLIMTKHSATV). Residues 1-28 (DLQTTGADHSATVNPDQQLIMTKHSATV) are 2 X approximate repeats. 4 O-linked (GalNAc...) threonine glycosylation sites follow: T5, T12, T22, and T27. Fibronectin type-II domains follow at residues 29–73 (TPEN…YCAA) and 74–120 (TDYA…WKYC). Intrachain disulfides connect C34–C58, C48–C71, C79–C105, and C93–C120.

Belongs to the seminal plasma protein family. As to quaternary structure, one glycoform exists as a monomer while the other forms a heterotetramer with HSP-2 and binds heparin. In terms of processing, O-glycosylated on Thr. There are two forms of HSP-1 which probably differ in the amount of sialylation of polysaccharide. In terms of tissue distribution, major component of seminal plasma.

The protein resides in the secreted. Functionally, could enhance the fertilizing capacity of spermatozoa upon interaction with heparin-like glycosaminoglycans present in the female genital tract. In Equus caballus (Horse), this protein is Seminal plasma protein HSP-1.